The primary structure comprises 95 residues: Co-chaperonin GroES (95 aa).

This sequence belongs to the GroES chaperonin family. As to quaternary structure, heptamer of 7 subunits arranged in a ring. Interacts with the chaperonin GroEL.

The protein resides in the cytoplasm. Together with the chaperonin GroEL, plays an essential role in assisting protein folding. The GroEL-GroES system forms a nano-cage that allows encapsulation of the non-native substrate proteins and provides a physical environment optimized to promote and accelerate protein folding. GroES binds to the apical surface of the GroEL ring, thereby capping the opening of the GroEL channel. This is Co-chaperonin GroES from Aliivibrio salmonicida (strain LFI1238) (Vibrio salmonicida (strain LFI1238)).